A 186-amino-acid polypeptide reads, in one-letter code: Mediator of RNA polymerase II transcription subunit 10a (186 aa).

The protein belongs to the Mediator complex subunit 10 family. In terms of assembly, mono-, di- and oligomers. Component of the Mediator complex. Interacts with GEBPL.

The protein localises to the nucleus. Functionally, component of the Mediator complex, a coactivator involved in the regulated transcription of nearly all RNA polymerase II-dependent genes. Mediator functions as a bridge to convey information from gene-specific regulatory proteins to the basal RNA polymerase II transcription machinery. The Mediator complex, having a compact conformation in its free form, is recruited to promoters by direct interactions with regulatory proteins and serves for the assembly of a functional pre-initiation complex with RNA polymerase II and the general transcription factors. The chain is Mediator of RNA polymerase II transcription subunit 10a from Arabidopsis thaliana (Mouse-ear cress).